Reading from the N-terminus, the 176-residue chain is Ribosome maturation factor RimM (176 aa).

A PRC barrel domain is found at 100–173 (EGEFHLLDLV…WLRLTPPPGL (74 aa)).

The protein belongs to the RimM family. As to quaternary structure, binds ribosomal protein uS19.

Its subcellular location is the cytoplasm. An accessory protein needed during the final step in the assembly of 30S ribosomal subunit, possibly for assembly of the head region. Essential for efficient processing of 16S rRNA. May be needed both before and after RbfA during the maturation of 16S rRNA. It has affinity for free ribosomal 30S subunits but not for 70S ribosomes. The protein is Ribosome maturation factor RimM of Prochlorococcus marinus (strain MIT 9303).